The following is a 317-amino-acid chain: MAVQGFQRRLLGSLNSTPTAIPQLGLAANQTGARCLEVSIPDGLFLSLGLVSLVENVLVVATIAKNRNLHSPTYCFICCLALSDLLVSGGNVLETVVILLLEASALAARAAVVQPLDNVIDVITCSSMVSSLCFLGAIAVDRYVSIFYALRYHSIVTLPRARQAIAAIWVASVLFSTLFIAYYDHAAVLLCLVVFFLAMLVXMAVLYVHMLARACQHAQGIARLHKRQRPLHQGFGLKGAVTLTILLGIFFLCWGPFFLHLTLIVLCPQHPTCSCIFKNFNLFLTLIICNAIIDPLIYAFRRQELRRTLKEGLTCSW.

The Extracellular segment spans residues 1–37; it reads MAVQGFQRRLLGSLNSTPTAIPQLGLAANQTGARCLE. The N-linked (GlcNAc...) asparagine glycan is linked to Asn29. The chain crosses the membrane as a helical span at residues 38–63; the sequence is VSIPDGLFLSLGLVSLVENVLVVATI. At 64–72 the chain is on the cytoplasmic side; that stretch reads AKNRNLHSP. A helical transmembrane segment spans residues 73 to 93; that stretch reads TYCFICCLALSDLLVSGGNVL. At 94–118 the chain is on the extracellular side; it reads ETVVILLLEASALAARAAVVQPLDN. A helical transmembrane segment spans residues 119-140; it reads VIDVITCSSMVSSLCFLGAIAV. The Cytoplasmic segment spans residues 141–163; it reads DRYVSIFYALRYHSIVTLPRARQ. A helical membrane pass occupies residues 164-183; the sequence is AIAAIWVASVLFSTLFIAYY. Residues 184–191 lie on the Extracellular side of the membrane; sequence DHAAVLLC. The chain crosses the membrane as a helical span at residues 192–211; the sequence is LVVFFLAMLVXMAVLYVHML. Residues 212 to 240 lie on the Cytoplasmic side of the membrane; sequence ARACQHAQGIARLHKRQRPLHQGFGLKGA. The helical transmembrane segment at 241 to 266 threads the bilayer; that stretch reads VTLTILLGIFFLCWGPFFLHLTLIVL. Residues 267-279 lie on the Extracellular side of the membrane; the sequence is CPQHPTCSCIFKN. The helical transmembrane segment at 280–300 threads the bilayer; sequence FNLFLTLIICNAIIDPLIYAF. Over 301–317 the chain is Cytoplasmic; that stretch reads RRQELRRTLKEGLTCSW. The S-palmitoyl cysteine moiety is linked to residue Cys315.

The protein belongs to the G-protein coupled receptor 1 family. Interacts with MGRN1, but does not undergo MGRN1-mediated ubiquitination; this interaction competes with GNAS-binding and thus inhibits agonist-induced cAMP production. Interacts with OPN3; the interaction results in a decrease in MC1R-mediated cAMP signaling and ultimately a decrease in melanin production in melanocytes.

It localises to the cell membrane. Functionally, receptor for MSH (alpha, beta and gamma) and ACTH. The activity of this receptor is mediated by G proteins which activate adenylate cyclase. Mediates melanogenesis, the production of eumelanin (black/brown) and phaeomelanin (red/yellow), via regulation of cAMP signaling in melanocytes. In Hylobates muelleri (Mueller's Bornean gibbon), this protein is Melanocyte-stimulating hormone receptor (MC1R).